The primary structure comprises 291 residues: 4-hydroxy-tetrahydrodipicolinate synthase (291 aa).

Threonine 45 is a binding site for pyruvate. Tyrosine 133 functions as the Proton donor/acceptor in the catalytic mechanism. Lysine 161 serves as the catalytic Schiff-base intermediate with substrate. Isoleucine 203 contacts pyruvate.

Belongs to the DapA family. Homotetramer; dimer of dimers.

It is found in the cytoplasm. The enzyme catalyses L-aspartate 4-semialdehyde + pyruvate = (2S,4S)-4-hydroxy-2,3,4,5-tetrahydrodipicolinate + H2O + H(+). The protein operates within amino-acid biosynthesis; L-lysine biosynthesis via DAP pathway; (S)-tetrahydrodipicolinate from L-aspartate: step 3/4. In terms of biological role, catalyzes the condensation of (S)-aspartate-beta-semialdehyde [(S)-ASA] and pyruvate to 4-hydroxy-tetrahydrodipicolinate (HTPA). The polypeptide is 4-hydroxy-tetrahydrodipicolinate synthase (Acidithiobacillus ferrooxidans (strain ATCC 23270 / DSM 14882 / CIP 104768 / NCIMB 8455) (Ferrobacillus ferrooxidans (strain ATCC 23270))).